A 110-amino-acid chain; its full sequence is uncharacterized protein (110 aa).

This is an uncharacterized protein from Homo sapiens (Human).